A 409-amino-acid polypeptide reads, in one-letter code: Tryptophan synthase beta chain (409 aa).

Residue Lys-100 is modified to N6-(pyridoxal phosphate)lysine.

The protein belongs to the TrpB family. In terms of assembly, tetramer of two alpha and two beta chains. Pyridoxal 5'-phosphate serves as cofactor.

The catalysed reaction is (1S,2R)-1-C-(indol-3-yl)glycerol 3-phosphate + L-serine = D-glyceraldehyde 3-phosphate + L-tryptophan + H2O. The protein operates within amino-acid biosynthesis; L-tryptophan biosynthesis; L-tryptophan from chorismate: step 5/5. The beta subunit is responsible for the synthesis of L-tryptophan from indole and L-serine. This Pyrobaculum arsenaticum (strain DSM 13514 / JCM 11321 / PZ6) protein is Tryptophan synthase beta chain.